Consider the following 448-residue polypeptide: Enolase (448 aa).

Q164 serves as a coordination point for (2R)-2-phosphoglycerate. E206 acts as the Proton donor in catalysis. Mg(2+)-binding residues include D243, E289, and D316. (2R)-2-phosphoglycerate is bound by residues K341, R370, S371, and K392. K341 functions as the Proton acceptor in the catalytic mechanism.

The protein belongs to the enolase family. The cofactor is Mg(2+).

It is found in the cytoplasm. The protein resides in the secreted. The protein localises to the cell surface. The enzyme catalyses (2R)-2-phosphoglycerate = phosphoenolpyruvate + H2O. Its pathway is carbohydrate degradation; glycolysis; pyruvate from D-glyceraldehyde 3-phosphate: step 4/5. Catalyzes the reversible conversion of 2-phosphoglycerate (2-PG) into phosphoenolpyruvate (PEP). It is essential for the degradation of carbohydrates via glycolysis. The sequence is that of Enolase from Oenococcus oeni (strain ATCC BAA-331 / PSU-1).